The chain runs to 342 residues: Protein FinQ (342 aa).

The H-T-H motif DNA-binding region spans 208 to 227; the sequence is RDREFNLLNAQISMVLYICS.

Its function is as follows. Transcriptional inhibitor of the F plasmid transfer genes. FinQ may regulate a gene or genes encoded on the IncI plasmids, and coincidentally may inhibit F transfer when coresident. The protein is Protein FinQ (finQ) of Escherichia coli.